We begin with the raw amino-acid sequence, 175 residues long: Peptide deformylase (175 aa).

Fe cation contacts are provided by C96 and H138. E139 is an active-site residue. H142 contributes to the Fe cation binding site.

Belongs to the polypeptide deformylase family. Fe(2+) is required as a cofactor.

It carries out the reaction N-terminal N-formyl-L-methionyl-[peptide] + H2O = N-terminal L-methionyl-[peptide] + formate. In terms of biological role, removes the formyl group from the N-terminal Met of newly synthesized proteins. Requires at least a dipeptide for an efficient rate of reaction. N-terminal L-methionine is a prerequisite for activity but the enzyme has broad specificity at other positions. The sequence is that of Peptide deformylase from Rhodopseudomonas palustris (strain BisB18).